The sequence spans 1079 residues: Electrogenic sodium bicarbonate cotransporter 1 (1079 aa).

Residues 1–62 are required for interaction with AHCYL1; sequence MEDEAVLDRG…EKKEKERISE (62 aa). Over 1–466 the chain is Cytoplasmic; sequence MEDEAVLDRG…FASDFYDALN (466 aa). The residue at position 2 (Glu-2) is a Phosphoserine. Residue Tyr-30 is modified to Phosphotyrosine. Residues 39–52 show a composition bias toward basic residues; it reads YRRRRRHKRKAGHK. The interval 39–78 is disordered; the sequence is YRRRRRHKRKAGHKEKKEKERISENYSDKSDVENADESSS. Positions 53-70 are enriched in basic and acidic residues; sequence EKKEKERISENYSDKSDV. A phosphoserine mark is found at Ser-61, Ser-65, Ser-68, Ser-223, Ser-232, Ser-233, and Ser-245. Residues 235–266 are disordered; it reads SRMFSNPDNGSPAMTHRNLTSSSLNDISDKPE. Phosphothreonine is present on residues Thr-249 and Thr-254. The segment covering 251 to 260 has biased composition (polar residues); the sequence is RNLTSSSLND. Phosphoserine is present on residues Ser-256, Ser-257, and Ser-262. Residues 467–491 form a helical membrane-spanning segment; sequence IQALSAILFIYLATVTNAITFGGLL. Over 492-501 the chain is Extracellular; sequence GDATDNMQGV. Residues 502–520 form a helical membrane-spanning segment; it reads LESFLGTAVSGAIFCLFAG. Position 521 (Gln-521) is a topological domain, cytoplasmic. Residues 522 to 542 form a discontinuously helical membrane-spanning segment; it reads PLTILSSTGPVLVFERLLFNF. At 543-550 the chain is on the extracellular side; it reads SKDHSFDY. Residues 551-571 form a helical membrane-spanning segment; it reads LEFRLWIGLWSAFMCLILVAT. Residues 572–585 lie on the Cytoplasmic side of the membrane; it reads DASFLVQYFTRFTE. The chain crosses the membrane as a helical span at residues 586–609; it reads EGFSSLISFIFIYDAFKKMIKLAD. N-linked (GlcNAc) asparagine glycosylation is found at Ile-597 and Phe-617. Over 610-692 the chain is Extracellular; that stretch reads YYPINSDFRV…GNNCDFVPDI (83 aa). Residues 693–710 traverse the membrane as a helical segment; the sequence is TLMSFILFLGTYTSSMAM. At 711–725 the chain is on the cytoplasmic side; it reads KKFKTSRYFPTTARK. Residues 726 to 745 form a helical membrane-spanning segment; the sequence is LISDFAIILSILIFCVIDAL. Over 746-779 the chain is Extracellular; the sequence is VGVDTPKLIVPSEFKPTSPHRGWFVPPFGGNPWW. Residues 748–779 form an interaction with CA4 region; sequence VDTPKLIVPSEFKPTSPHRGWFVPPFGGNPWW. The helical transmembrane segment at 780–807 threads the bilayer; it reads VCLAAAIPALLVTILIFMDQQITAVIVN. At 808–819 the chain is on the cytoplasmic side; that stretch reads RKEHKLKKGAGY. A helical transmembrane segment spans residues 820-836; sequence HLDLFWVAILMVVCSFM. Position 837 (Ala-837) is a topological domain, extracellular. Residues 838 to 855 form a discontinuously helical membrane-spanning segment; sequence LPWYVAATVISIAHIDSL. The Cytoplasmic portion of the chain corresponds to 856 to 877; sequence KMETETSAPGEQPKFLGVREQR. The chain crosses the membrane as a helical span at residues 878-894; it reads VTGTLVFILTGLSVFMA. Residues 895-901 lie on the Extracellular side of the membrane; the sequence is PILKFIP. Residues 902–918 traverse the membrane as a helical segment; it reads MPVLYGVFLYMGVASLN. Over 919–960 the chain is Cytoplasmic; that stretch reads GVQFMDRLKLLLMPLKHQPDFIYLRHVPLRRVHLFTSLQVLC. Positions 961–986 form an intramembrane region, discontinuously helical; the sequence is LALLWILKSTVAAIIFPVMILALVAV. At 987-1079 the chain is on the cytoplasmic side; the sequence is RKGMDYLFSQ…STFLERHTSC (93 aa). The tract at residues 1002–1004 is CA2-binding; it reads LDD. The disordered stretch occupies residues 1012–1079; sequence KKKEDEKKKK…STFLERHTSC (68 aa). Residues Ser-1026 and Ser-1029 each carry the phosphoserine modification. Ser-1026 is subject to Phosphoserine; by PKA. The segment at 1030 to 1033 is CA2-binding; that stretch reads DNDD. Phosphoserine occurs at positions 1034 and 1044. Positions 1057 to 1059 are required for basolateral targeting; sequence FLS. Phosphoserine is present on residues Asp-1060, Leu-1064, Ser-1069, and Ser-1078. Residues 1062–1079 show a composition bias toward basic and acidic residues; sequence KPLDRERSSTFLERHTSC.

It belongs to the anion exchanger (TC 2.A.31) family. In terms of assembly, homodimer. Interacts with CA2/carbonic anhydrase 2 and CA4/carbonic anhydrase 4 which may regulate transporter activity. Isoform 1 but not isoform 2 interacts with AHCYL1 (via PEST domain when phosphorylated); the interaction increases SLC4A4 isoform 1 activity. Interacts with AHCYL2. In terms of processing, phosphorylation of Ser-1026 by PKA increases the binding of CA2 and changes the Na(+):HCO3(-) stoichiometry of the transporter from 3:1 to 2:1. Phosphorylated in presence of STK39 and dephosphorylated in presence of PP1 phosphatase; phosphorylation seems to inhibit SLC4A4 activity. N-glycosylation is not necessary for the transporter basic functions. As to expression, specifically expressed in kidney and to a lower extent in liver, lung, spleen, brain, skeletal muscle and heart. In kidney, expressed in proximal tubules at the corticomedullary junction. Isoform 2 is specifically expressed in kidney. Isoform 1 is expressed in kidney and pancreas while isoform 3 is specifically expressed in brain (at protein level). In brain, isoform 1 is expressed in astrocytes while isoform 3 is expressed in neurons (at protein level). In the eye, isoform 1 is expressed in cornea, conjunctiva, lens epithelium, ciliary bodies and retina while isoform 2 is detected only in the conjunctiva.

It is found in the basolateral cell membrane. It localises to the cell membrane. The enzyme catalyses 2 hydrogencarbonate(out) + Na(+)(out) = 2 hydrogencarbonate(in) + Na(+)(in). The catalysed reaction is 3 hydrogencarbonate(out) + Na(+)(out) = 3 hydrogencarbonate(in) + Na(+)(in). With respect to regulation, inhibited by 4,4'-diisothiocyanatostilbene-2,2'-disulfonic acid (DIDS). Its function is as follows. Electrogenic sodium/bicarbonate cotransporter with a Na(+):HCO3(-) stoichiometry varying from 1:2 to 1:3. May regulate bicarbonate influx/efflux at the basolateral membrane of cells and regulate intracellular pH. This Rattus norvegicus (Rat) protein is Electrogenic sodium bicarbonate cotransporter 1 (Slc4a4).